Consider the following 177-residue polypeptide: Calcium-binding protein CML38 (177 aa).

Residues 1 to 11 (MKNNTQPQSSF) are compositionally biased toward polar residues. The interval 1-44 (MKNNTQPQSSFKKLCRKLSPKREDSAGEIQQHNSSNGEDKNREL) is disordered. 4 consecutive EF-hand domains span residues 39 to 74 (DKNRELEAVFSYMDANRDGRISPEELQKSFMTLGEQ), 75 to 110 (LSDEEAVAAVRLSDTDGDGMLDFEEFSQLIKVDDEE), 111 to 146 (EKKMELKGAFRLYIAEGEDCITPRSLKMMLKKLGES), and 147 to 177 (RTTDDCRVMISAFDLNADGVLSFDEFALMMR). Ca(2+)-binding residues include aspartate 52, asparagine 54, aspartate 56, arginine 58, glutamate 63, aspartate 88, aspartate 90, aspartate 92, methionine 94, and glutamate 99. The Ca(2+) site is built by aspartate 160, asparagine 162, aspartate 164, and glutamate 171.

As to quaternary structure, binds to ABCG36. In terms of tissue distribution, expressed in cotyledons and guard cells of young leaves. In mature root, expressed in the epidermis, trichoblasts, young lateral root and root tip. Expressed from stage 9 to 15 of flower development in anther wall.

Potential calcium sensor that binds calcium in vitro. This Arabidopsis thaliana (Mouse-ear cress) protein is Calcium-binding protein CML38.